A 362-amino-acid polypeptide reads, in one-letter code: Sterol-4-alpha-carboxylate 3-dehydrogenase, decarboxylating (362 aa).

An N-acetylmethionine modification is found at Met-1. The active-site Proton acceptor is Tyr-161. Lys-165 lines the NAD(+) pocket. Residues 287–307 (WMAYYLAFLLSLLVMVVSPLI) form a helical membrane-spanning segment. The Prevents secretion from ER signature appears at 359–362 (RKDK).

This sequence belongs to the 3-beta-HSD family. Homodimer.

The protein resides in the endoplasmic reticulum membrane. Its subcellular location is the lipid droplet. The catalysed reaction is a 3beta-hydroxysteroid-4alpha-carboxylate + NADP(+) = a 3-oxosteroid + CO2 + NADPH. It carries out the reaction a 3beta-hydroxysteroid-4alpha-carboxylate + NAD(+) = a 3-oxosteroid + CO2 + NADH. It catalyses the reaction 4alpha-carboxyzymosterol + NADP(+) = zymosterone + CO2 + NADPH. The enzyme catalyses 4alpha-carboxy-4beta-methyl-5alpha-cholest-8-en-3beta-ol + NADP(+) = 4alpha-methyl-5alpha-cholest-8-en-3-one + CO2 + NADPH. The catalysed reaction is 4alpha-carboxy-5alpha-cholest-8-ene-3beta-ol + NADP(+) = 5alpha-cholest-8-en-3-one + CO2 + NADPH. It carries out the reaction 4beta-methylzymosterol-4alpha-carboxylate + NADP(+) = 3-dehydro-4-methylzymosterol + CO2 + NADPH. It catalyses the reaction 4beta-methylzymosterol-4alpha-carboxylate + NAD(+) = 3-dehydro-4-methylzymosterol + CO2 + NADH. The enzyme catalyses 4alpha-carboxy-5alpha-cholest-8-ene-3beta-ol + NAD(+) = 5alpha-cholest-8-en-3-one + CO2 + NADH. The catalysed reaction is 4alpha-carboxy-4beta-methyl-5alpha-cholest-8-en-3beta-ol + NAD(+) = 4alpha-methyl-5alpha-cholest-8-en-3-one + CO2 + NADH. It carries out the reaction 4alpha-carboxyzymosterol + NAD(+) = zymosterone + CO2 + NADH. Its pathway is steroid biosynthesis; zymosterol biosynthesis; zymosterol from lanosterol: step 4/6. Catalyzes the NAD(P)(+)-dependent oxidative decarboxylation of the C4 methyl groups of 4-alpha-carboxysterols in post-squalene cholesterol biosynthesis. Plays a role in the regulation of the endocytic trafficking of EGFR. The chain is Sterol-4-alpha-carboxylate 3-dehydrogenase, decarboxylating (Nsdhl) from Mus musculus (Mouse).